Here is a 694-residue protein sequence, read N- to C-terminus: Long-chain-fatty-acid--CoA ligase 4 (694 aa).

Residues 1-21 (MTEQYSVAVGEAANEHETAPR) form a disordered region. 269 to 280 (YTSGSTGTPKGV) contributes to the ATP binding site. Residues 527 to 576 (DGWFRTGDIAEWTPKGQVKIIDRKKNLVKTLNGEYIALEKLESIYRSNPY) carry the FACS motif.

The protein belongs to the ATP-dependent AMP-binding enzyme family. Interacts with FAT1. Mg(2+) is required as a cofactor.

It localises to the lipid droplet. The catalysed reaction is a long-chain fatty acid + ATP + CoA = a long-chain fatty acyl-CoA + AMP + diphosphate. It catalyses the reaction (9Z)-hexadecenoate + ATP + CoA = (9Z)-hexadecenoyl-CoA + AMP + diphosphate. It carries out the reaction (9Z)-octadecenoate + ATP + CoA = (9Z)-octadecenoyl-CoA + AMP + diphosphate. The enzyme catalyses hexadecanoate + ATP + CoA = hexadecanoyl-CoA + AMP + diphosphate. Functionally, activates long-chain fatty acids (LCFA) by esterification of the fatty acids into metabolically active CoA-thioesters for subsequent degradation or incorporation into phospholipids. Also facilitates the transport of LCFAs into the cell, either by active transport or by decreasing the intracellular LCFA concentration. Contributes, with FAA1, to the activation of imported myristate. Also involved in long-chain base (LCB) uptake. In contrast ot LCFA uptake, LCB uptake does not require ATP, suggesting that the enzyme is directly involved in LCB uptake. Involved in the sphingolipid-to-glycerolipid metabolic pathway, converting the sphingolipid metabolite hexadecenoic acid to hexadecenoyl-CoA, which is then further converted to glycerolipids. This Saccharomyces cerevisiae (strain ATCC 204508 / S288c) (Baker's yeast) protein is Long-chain-fatty-acid--CoA ligase 4 (FAA4).